Reading from the N-terminus, the 312-residue chain is Photosystem I assembly protein Ycf4 (312 aa).

3 consecutive transmembrane segments (helical) span residues 42-62 (WAFI…SSYF), 91-111 (IILF…GLFL), and 113-133 (FYLW…IYIY).

This sequence belongs to the Ycf4 family.

The protein localises to the plastid. The protein resides in the chloroplast thylakoid membrane. Functionally, seems to be required for the assembly of the photosystem I complex. This chain is Photosystem I assembly protein Ycf4, found in Pleurastrum terricola (Filamentous green alga).